We begin with the raw amino-acid sequence, 637 residues long: Biosynthetic arginine decarboxylase (637 aa).

At Lys101 the chain carries N6-(pyridoxal phosphate)lysine. 286–296 (FDVGGGLAVDY) is a substrate binding site.

It belongs to the Orn/Lys/Arg decarboxylase class-II family. SpeA subfamily. Mg(2+) serves as cofactor. It depends on pyridoxal 5'-phosphate as a cofactor.

The catalysed reaction is L-arginine + H(+) = agmatine + CO2. It participates in amine and polyamine biosynthesis; agmatine biosynthesis; agmatine from L-arginine: step 1/1. In terms of biological role, catalyzes the biosynthesis of agmatine from arginine. In Shewanella halifaxensis (strain HAW-EB4), this protein is Biosynthetic arginine decarboxylase.